Consider the following 319-residue polypeptide: Beta-ketoacyl-[acyl-carrier-protein] synthase III (319 aa).

Active-site residues include Cys113 and His246. The interval 247-251 (QANIR) is ACP-binding. Asn276 is an active-site residue.

This sequence belongs to the thiolase-like superfamily. FabH family. Homodimer.

The protein resides in the cytoplasm. The enzyme catalyses malonyl-[ACP] + acetyl-CoA + H(+) = 3-oxobutanoyl-[ACP] + CO2 + CoA. The protein operates within lipid metabolism; fatty acid biosynthesis. In terms of biological role, catalyzes the condensation reaction of fatty acid synthesis by the addition to an acyl acceptor of two carbons from malonyl-ACP. Catalyzes the first condensation reaction which initiates fatty acid synthesis and may therefore play a role in governing the total rate of fatty acid production. Possesses both acetoacetyl-ACP synthase and acetyl transacylase activities. Its substrate specificity determines the biosynthesis of branched-chain and/or straight-chain of fatty acids. This chain is Beta-ketoacyl-[acyl-carrier-protein] synthase III, found in Ehrlichia ruminantium (strain Gardel).